The following is a 70-amino-acid chain: Large ribosomal subunit protein bL32 (70 aa).

Over residues 1–19 (MAVPKKKTSPSRRGMRRSH) the composition is skewed to basic residues. Residues 1 to 21 (MAVPKKKTSPSRRGMRRSHQA) form a disordered region.

This sequence belongs to the bacterial ribosomal protein bL32 family.

The protein is Large ribosomal subunit protein bL32 of Granulibacter bethesdensis (strain ATCC BAA-1260 / CGDNIH1).